The following is a 373-amino-acid chain: UDP-N-acetylglucosamine--N-acetylmuramyl-(pentapeptide) pyrophosphoryl-undecaprenol N-acetylglucosamine transferase (373 aa).

Residues 10–12, Asn124, Ser195, and Gln297 each bind UDP-N-acetyl-alpha-D-glucosamine; that span reads TGG.

This sequence belongs to the glycosyltransferase 28 family. MurG subfamily.

Its subcellular location is the cell membrane. The enzyme catalyses Mur2Ac(oyl-L-Ala-gamma-D-Glu-L-Lys-D-Ala-D-Ala)-di-trans,octa-cis-undecaprenyl diphosphate + UDP-N-acetyl-alpha-D-glucosamine = beta-D-GlcNAc-(1-&gt;4)-Mur2Ac(oyl-L-Ala-gamma-D-Glu-L-Lys-D-Ala-D-Ala)-di-trans,octa-cis-undecaprenyl diphosphate + UDP + H(+). The protein operates within cell wall biogenesis; peptidoglycan biosynthesis. Its function is as follows. Cell wall formation. Catalyzes the transfer of a GlcNAc subunit on undecaprenyl-pyrophosphoryl-MurNAc-pentapeptide (lipid intermediate I) to form undecaprenyl-pyrophosphoryl-MurNAc-(pentapeptide)GlcNAc (lipid intermediate II). This Oenococcus oeni (strain ATCC BAA-331 / PSU-1) protein is UDP-N-acetylglucosamine--N-acetylmuramyl-(pentapeptide) pyrophosphoryl-undecaprenol N-acetylglucosamine transferase.